A 664-amino-acid polypeptide reads, in one-letter code: Intraflagellar transport protein 70A (664 aa).

TPR repeat units lie at residues 11-44 (DGEF…SPRS), 45-78 (RAGL…HPEL), 153-186 (LDGQ…SGYR), 188-220 (DLSY…GIRQ), 392-423 (LTKQ…EKYI), 424-456 (PVLM…CNDH), and 458-491 (VWKL…HYDN). Residues 507–534 (YIMTSQNEEAEELMRKIEKEEEQLSYDD) are a coiled coil. A TPR 8 repeat occupies 543-576 (CIVNLVIGTLYCAKGNYDFGISRVIKSLEPYNKK).

It belongs to the TTC30/dfy-1/fleer family.

It localises to the cell projection. The protein resides in the cilium. Its function is as follows. Required for polyglutamylation of axonemal tubulin. Plays a role in anterograde intraflagellar transport (IFT), the process by which cilia precursors are transported from the base of the cilium to the site of their incorporation at the tip. The polypeptide is Intraflagellar transport protein 70A (IFT70A) (Bos taurus (Bovine)).